The following is a 224-amino-acid chain: CRP-like cAMP-activated global transcriptional regulator (224 aa).

3',5'-cyclic AMP-binding positions include 64–70 (GRENLLT), 79–82 (GELS), 89–90 (RT), 134–135 (TN), 142–143 (IF), and 178–188 (EEIAQLVGASR). The HTH crp-type domain maps to 144–217 (TDVPGRVAKQ…GKSVLISDSE (74 aa)). The H-T-H motif DNA-binding region spans 177–196 (QEEIAQLVGASRETVNKALA).

Homodimer.

Global transcriptional regulator that complexes with cAMP and binds to specific DNA promoter sites, causing DNA-bending, to regulate transcription. cAMP improves binding to specific DNA sequences, probably by altering protein conformation. Activates expression of whiB1. The polypeptide is CRP-like cAMP-activated global transcriptional regulator (Mycobacterium tuberculosis (strain CDC 1551 / Oshkosh)).